We begin with the raw amino-acid sequence, 581 residues long: DEAD-box ATP-dependent RNA helicase 22 (581 aa).

The Q motif signature appears at 80-108 (VSWKSLGLSDNVSIALRDSGFDRPSLTQA). A Helicase ATP-binding domain is found at 111–380 (IPSILSGKDV…GGILKHMFQD (270 aa)). Position 124-131 (124-131 (AETGSGKT)) interacts with ATP. The short motif at 244-247 (DEAD) is the DEAD box element. A Helicase C-terminal domain is found at 408-566 (QVDALIEAVK…GFRNKVKKRA (159 aa)).

Belongs to the DEAD box helicase family.

The enzyme catalyses ATP + H2O = ADP + phosphate + H(+). The protein is DEAD-box ATP-dependent RNA helicase 22 (RH22) of Arabidopsis thaliana (Mouse-ear cress).